We begin with the raw amino-acid sequence, 1053 residues long: DIS3-like exonuclease 1 (1053 aa).

A CSD1 domain is found at 236–310 (AGIKSGRYIQ…KSEWKGRTAA (75 aa)). A disordered region spans residues 306 to 332 (GRTAALGENDSDDKASGESPSEPMPTG). Residues 365–431 (ILVTPWDYRI…GEIATILVEN (67 aa)) enclose the CSD2 domain. The RNB domain occupies 465 to 816 (RKDLRTTHLV…VHRLLMAAIS (352 aa)). Position 989 is a phosphoserine (serine 989).

The protein belongs to the RNR ribonuclease family. As to quaternary structure, component of the RNA exosome complex. The catalytically inactive RNA exosome core (Exo-9) complex is believed to associate with catalytic subunits EXOSC10, and DIS3 or DIS3L in cytoplasmic- and nuclear-specific RNA exosome complex forms. Requires Mg(2+) as cofactor.

Its subcellular location is the cytoplasm. It carries out the reaction Exonucleolytic cleavage in the 3'- to 5'-direction to yield nucleoside 5'-phosphates.. Functionally, catalytic component of the RNA exosome complex which has 3'-&gt;5' exoribonuclease activity and participates in a multitude of cellular RNA processing and degradation events. In the cytoplasm, the RNA exosome complex is involved in general mRNA turnover and specifically degrades inherently unstable mRNAs containing AU-rich elements (AREs) within their 3' untranslated regions, and in RNA surveillance pathways, preventing translation of aberrant mRNAs. It seems to be involved in degradation of histone mRNA. This Mus musculus (Mouse) protein is DIS3-like exonuclease 1 (Dis3l).